The following is a 195-amino-acid chain: Orotate phosphoribosyltransferase (195 aa).

Residues arginine 86, lysine 90, histidine 92, and 111–119 (DDVATTGVS) each bind 5-phospho-alpha-D-ribose 1-diphosphate. Orotate-binding residues include threonine 115 and arginine 143.

The protein belongs to the purine/pyrimidine phosphoribosyltransferase family. PyrE subfamily. As to quaternary structure, homodimer. Mg(2+) is required as a cofactor.

It carries out the reaction orotidine 5'-phosphate + diphosphate = orotate + 5-phospho-alpha-D-ribose 1-diphosphate. It participates in pyrimidine metabolism; UMP biosynthesis via de novo pathway; UMP from orotate: step 1/2. Catalyzes the transfer of a ribosyl phosphate group from 5-phosphoribose 1-diphosphate to orotate, leading to the formation of orotidine monophosphate (OMP). This is Orotate phosphoribosyltransferase from Saccharolobus solfataricus (strain ATCC 35092 / DSM 1617 / JCM 11322 / P2) (Sulfolobus solfataricus).